The sequence spans 235 residues: MFFFPKLRKLIGSTVIDHDTKNSSGKEEIMSNSRLALVIINHAFDKVLSLTWHCGILSEIRSGLMLMFGIFQLMCSLGVIVLLLPIIILDAIDLFLYMCRLLDYGCKLFHYNRSSLPVADGKEKTSGPISGKEEIVIDEEIINMLNESSESLINHTTAGLEYDISSGSVNKSRRLNSTSTVTFVKQNKLVNERREDAYYEEEDDDFLSNPNYDKISLIEKSFTSRFEVACEQKAA.

A helical transmembrane segment spans residues 68–88; sequence FGIFQLMCSLGVIVLLLPIII. Residue Ser177 is modified to Phosphoserine.

It is found in the lipid droplet. Its subcellular location is the membrane. The chain is Bypass of stop codon protein 2 (BSC2) from Saccharomyces cerevisiae (strain ATCC 204508 / S288c) (Baker's yeast).